The following is a 124-amino-acid chain: Large ribosomal subunit protein eL31 (124 aa).

A Phosphotyrosine modification is found at Tyr102.

Belongs to the eukaryotic ribosomal protein eL31 family.

This is Large ribosomal subunit protein eL31 (RpL31) from Drosophila melanogaster (Fruit fly).